Here is a 214-residue protein sequence, read N- to C-terminus: Adenylate kinase (214 aa).

Residue 10–15 (GAGKGT) coordinates ATP. The tract at residues 30–59 (STGDMFRAAIKAGTELGKQAKALMDEGKLV) is NMP. AMP is bound by residues T31, R36, 57-59 (KLV), 85-88 (GFPR), and Q92. The LID stretch occupies residues 122–159 (GRRVHQASGRSYHIVYNPPKVEGKDDVTGEDLIIRADD). ATP contacts are provided by residues R123 and 132–133 (SY). AMP contacts are provided by R156 and R167. ATP is bound at residue Q200.

It belongs to the adenylate kinase family. In terms of assembly, monomer.

Its subcellular location is the cytoplasm. It carries out the reaction AMP + ATP = 2 ADP. Its pathway is purine metabolism; AMP biosynthesis via salvage pathway; AMP from ADP: step 1/1. In terms of biological role, catalyzes the reversible transfer of the terminal phosphate group between ATP and AMP. Plays an important role in cellular energy homeostasis and in adenine nucleotide metabolism. It may be linked to the biosynthesis of lipopolysaccharide surface molecules, which are important for the pathogenesis of H.influenzae. The polypeptide is Adenylate kinase (Haemophilus influenzae (strain ATCC 51907 / DSM 11121 / KW20 / Rd)).